Here is a 542-residue protein sequence, read N- to C-terminus: CTP synthase (542 aa).

An amidoligase domain region spans residues 1-265 (MARYVFITGG…DSEVLSAFGI (265 aa)). CTP is bound at residue S13. Residue S13 coordinates UTP. 14–19 (SLGKGI) is an ATP binding site. An L-glutamine-binding site is contributed by Y54. Residue D71 participates in ATP binding. Mg(2+) is bound by residues D71 and E139. CTP is bound by residues 146 to 148 (DIE), 186 to 191 (KTKPTQ), and K222. Residues 186–191 (KTKPTQ) and K222 contribute to the UTP site. Residues 291–541 (TIAIVGKYTG…IEAAIEQSRL (251 aa)) form the Glutamine amidotransferase type-1 domain. G353 contributes to the L-glutamine binding site. C380 functions as the Nucleophile; for glutamine hydrolysis in the catalytic mechanism. L-glutamine-binding positions include 381 to 384 (FGMQ), E404, and R469. Active-site residues include H514 and E516.

Belongs to the CTP synthase family. In terms of assembly, homotetramer.

The catalysed reaction is UTP + L-glutamine + ATP + H2O = CTP + L-glutamate + ADP + phosphate + 2 H(+). The enzyme catalyses L-glutamine + H2O = L-glutamate + NH4(+). It carries out the reaction UTP + NH4(+) + ATP = CTP + ADP + phosphate + 2 H(+). The protein operates within pyrimidine metabolism; CTP biosynthesis via de novo pathway; CTP from UDP: step 2/2. Its activity is regulated as follows. Allosterically activated by GTP, when glutamine is the substrate; GTP has no effect on the reaction when ammonia is the substrate. The allosteric effector GTP functions by stabilizing the protein conformation that binds the tetrahedral intermediate(s) formed during glutamine hydrolysis. Inhibited by the product CTP, via allosteric rather than competitive inhibition. Catalyzes the ATP-dependent amination of UTP to CTP with either L-glutamine or ammonia as the source of nitrogen. Regulates intracellular CTP levels through interactions with the four ribonucleotide triphosphates. This Brucella anthropi (strain ATCC 49188 / DSM 6882 / CCUG 24695 / JCM 21032 / LMG 3331 / NBRC 15819 / NCTC 12168 / Alc 37) (Ochrobactrum anthropi) protein is CTP synthase.